The chain runs to 385 residues: Branched-chain-amino-acid aminotransferase, cytosolic (385 aa).

Lys221 carries the post-translational modification N6-(pyridoxal phosphate)lysine.

It belongs to the class-IV pyridoxal-phosphate-dependent aminotransferase family. In terms of assembly, homodimer. Pyridoxal 5'-phosphate serves as cofactor. In terms of tissue distribution, expressed in muscles.

It localises to the cytoplasm. It catalyses the reaction L-leucine + 2-oxoglutarate = 4-methyl-2-oxopentanoate + L-glutamate. The catalysed reaction is L-isoleucine + 2-oxoglutarate = (S)-3-methyl-2-oxopentanoate + L-glutamate. The enzyme catalyses L-valine + 2-oxoglutarate = 3-methyl-2-oxobutanoate + L-glutamate. Catalyzes the first reaction in the catabolism of the essential branched chain amino acids leucine, isoleucine, and valine. In Ovis aries (Sheep), this protein is Branched-chain-amino-acid aminotransferase, cytosolic (BCAT1).